We begin with the raw amino-acid sequence, 84 residues long: Putative protein BCE-1 (84 aa).

This is Putative protein BCE-1 (BCE1) from Homo sapiens (Human).